A 116-amino-acid chain; its full sequence is Large ribosomal subunit protein bL20c (116 aa).

The protein belongs to the bacterial ribosomal protein bL20 family.

The protein localises to the plastid. Its subcellular location is the chloroplast. Binds directly to 23S ribosomal RNA and is necessary for the in vitro assembly process of the 50S ribosomal subunit. It is not involved in the protein synthesizing functions of that subunit. The chain is Large ribosomal subunit protein bL20c from Oltmannsiellopsis viridis (Marine flagellate).